Reading from the N-terminus, the 151-residue chain is Small ribosomal subunit protein uS19 (151 aa).

This sequence belongs to the universal ribosomal protein uS19 family.

In terms of biological role, protein S19 forms a complex with S13 that binds strongly to the 16S ribosomal RNA. In Picrophilus torridus (strain ATCC 700027 / DSM 9790 / JCM 10055 / NBRC 100828 / KAW 2/3), this protein is Small ribosomal subunit protein uS19.